A 700-amino-acid polypeptide reads, in one-letter code: Polyribonucleotide nucleotidyltransferase (700 aa).

Mg(2+) is bound by residues D491 and D497. The region spanning 558–617 is the KH domain; sequence PNYAVIEINPDKIRDVIGKGGATIRQLTEETGAVIDIDDAGTIRIFGENKAATKAAIAKI. Residues 627 to 695 form the S1 motif domain; the sequence is GKTYEGTVAR…NRGRIKLTMK (69 aa).

This sequence belongs to the polyribonucleotide nucleotidyltransferase family. In terms of assembly, component of the RNA degradosome, which is a multiprotein complex involved in RNA processing and mRNA degradation. It depends on Mg(2+) as a cofactor.

It is found in the cytoplasm. The enzyme catalyses RNA(n+1) + phosphate = RNA(n) + a ribonucleoside 5'-diphosphate. In terms of biological role, involved in mRNA degradation. Catalyzes the phosphorolysis of single-stranded polyribonucleotides processively in the 3'- to 5'-direction. The chain is Polyribonucleotide nucleotidyltransferase from Psychrobacter cryohalolentis (strain ATCC BAA-1226 / DSM 17306 / VKM B-2378 / K5).